Consider the following 191-residue polypeptide: Inosine triphosphate pyrophosphatase (191 aa).

12–17 (TGNANK) is a binding site for ITP. E42 is a binding site for Mg(2+). ITP is bound by residues K54, 70–71 (DT), K87, 145–148 (FGWD), K168, and 173–174 (HR).

Belongs to the HAM1 NTPase family. As to quaternary structure, homodimer. It depends on Mg(2+) as a cofactor. The cofactor is Mn(2+).

Its subcellular location is the cytoplasm. It carries out the reaction ITP + H2O = IMP + diphosphate + H(+). It catalyses the reaction dITP + H2O = dIMP + diphosphate + H(+). The catalysed reaction is XTP + H2O = XMP + diphosphate + H(+). Its function is as follows. Pyrophosphatase that hydrolyzes non-canonical purine nucleotides such as inosine triphosphate (ITP), deoxyinosine triphosphate (dITP) or xanthosine 5'-triphosphate (XTP) to their respective monophosphate derivatives. The enzyme does not distinguish between the deoxy- and ribose forms. Probably excludes non-canonical purines from RNA and DNA precursor pools, thus preventing their incorporation into RNA and DNA and avoiding chromosomal lesions. This is Inosine triphosphate pyrophosphatase from Phytophthora infestans (strain T30-4) (Potato late blight agent).